The sequence spans 278 residues: Orotidine 5'-phosphate decarboxylase (278 aa).

Residues aspartate 40, 65–67 (KTH), 96–105 (DRKFIDIGNT), tyrosine 230, and arginine 248 each bind substrate. The Proton donor role is filled by lysine 98.

Belongs to the OMP decarboxylase family.

The enzyme catalyses orotidine 5'-phosphate + H(+) = UMP + CO2. The protein operates within pyrimidine metabolism; UMP biosynthesis via de novo pathway; UMP from orotate: step 2/2. The polypeptide is Orotidine 5'-phosphate decarboxylase (pyrG) (Penicillium chrysogenum (Penicillium notatum)).